Here is a 457-residue protein sequence, read N- to C-terminus: MALSEDTIKAVEATAGLIAAQGIEFTRAFYERMLTKNEELKDIFNLAHQRTLRQPKALLDSLVAYALSIRRINELYELKGKDLPWTGHLAELQGFFSVAERVANKHTSVGIQPAQYQIVGAHLLATIEDRVTKDKAVLAAWGKAYEFLADLLIKREEEIYAETEGPEGGWRQTRTFRVEEKTRVNEVICRFRLVPAKGGASVVQHKPGQYLAIFVRNPELFQHQQIRQYSIMSAPNSAYYEIAVHKDGAGTVSRYLHDHVDTGDLLEVAPPYGDFFLRYLEAGEQTAADTQASSEFQMLQGRAVNFAAEKTAPIVLISGGIGQTPLLSMLRFLAQKEGRETARPIFWIHAAHDSRVRAFKEEVDAIREAALPSLRVVTFLSEVRATDREGEDYDFAGRINLDRIPELARLEAGHANPHYFFVGPTGFMTAVEEQLRARSVPDDRIHFEMFGPFKASH.

Positions 2 to 157 (ALSEDTIKAV…LADLLIKREE (156 aa)) constitute a Globin domain. H106 serves as a coordination point for heme b. Active-site charge relay system residues include Y116 and E156. Residues 168–456 (GGWRQTRTFR…FEMFGPFKAS (289 aa)) are reductase. The region spanning 171-278 (RQTRTFRVEE…APPYGDFFLR (108 aa)) is the FAD-binding FR-type domain. Residues Y210 and 227 to 230 (RQYS) contribute to the FAD site. Position 320–325 (320–325 (GIGQTP)) interacts with NADP(+). 449-452 (MFGP) contacts FAD.

The protein belongs to the globin family. Two-domain flavohemoproteins subfamily. This sequence in the C-terminal section; belongs to the flavoprotein pyridine nucleotide cytochrome reductase family. In terms of assembly, monomer. The cofactor is heme b. Requires FAD as cofactor.

It catalyses the reaction 2 nitric oxide + NADPH + 2 O2 = 2 nitrate + NADP(+) + H(+). The enzyme catalyses 2 nitric oxide + NADH + 2 O2 = 2 nitrate + NAD(+) + H(+). Functionally, flavohemoprotein involved in nitric oxide (NO) detoxification in an aerobic process, termed nitric oxide dioxygenase (NOD) reaction that utilizes O(2) and NAD(P)H to convert NO to nitrate, which protects the protozoan parasite from various noxious nitrogen compounds. Therefore, plays a central role in the inducible response to nitrosative stress. May also be involved in O(2) detoxification. This chain is Flavohemoprotein-2 (hmpA-2), found in Giardia intestinalis (strain P15) (Giardia lamblia).